Here is a 256-residue protein sequence, read N- to C-terminus: Type II phosphatidylinositol 4,5-bisphosphate 4-phosphatase (256 aa).

Residues 1–10 show a composition bias toward basic and acidic residues; the sequence is MAADGIDERS. Positions 1 to 25 are disordered; it reads MAADGIDERSPLISPSSGNVTPTAP. Over residues 13 to 22 the composition is skewed to polar residues; that stretch reads ISPSSGNVTP. Residue Cys-106 is part of the active site. The CX5R motif motif lies at 106–112; it reads CKDISRR. 2 helical membrane passes run 191–211 and 226–246; these read CCTY…LTVG and WAVA…WGAI.

The protein resides in the late endosome membrane. It is found in the lysosome membrane. It carries out the reaction a 1,2-diacyl-sn-glycero-3-phospho-(1D-myo-inositol-4,5-bisphosphate) + H2O = a 1,2-diacyl-sn-glycero-3-phospho-(1D-myo-inositol-5-phosphate) + phosphate. Functionally, catalyzes the hydrolysis of phosphatidylinositol-4,5-bisphosphate (PtdIns-4,5-P2) to phosphatidylinositol-4-phosphate (PtdIns-4-P). In Xenopus laevis (African clawed frog), this protein is Type II phosphatidylinositol 4,5-bisphosphate 4-phosphatase.